A 184-amino-acid chain; its full sequence is Cysteine proteinase inhibitor 3 (184 aa).

Residues 1-35 (MLRRRGFCCCSGAPAAAAAALLLLAVAAAAPRAAG) form the signal peptide. The Cystatin domain maps to 48 to 134 (GMLAAIRREQ…KAVVEFRHVG (87 aa)). The Secondary area of contact motif lies at 90–94 (QVVTG). The tract at residues 138-165 (SQSATAADDNAGQDTADPTVASRNDLHN) is disordered.

The protein belongs to the cystatin family. Phytocystatin subfamily.

Its subcellular location is the secreted. In terms of biological role, specific inhibitor of cysteine proteinases. Probably involved in the regulation of endogenous processes and in defense against pests and pathogens. The polypeptide is Cysteine proteinase inhibitor 3 (Oryza sativa subsp. japonica (Rice)).